Reading from the N-terminus, the 509-residue chain is Lysine--tRNA ligase (509 aa).

Mg(2+) contacts are provided by Glu418 and Glu425.

Belongs to the class-II aminoacyl-tRNA synthetase family. In terms of assembly, homodimer. Requires Mg(2+) as cofactor.

It localises to the cytoplasm. The catalysed reaction is tRNA(Lys) + L-lysine + ATP = L-lysyl-tRNA(Lys) + AMP + diphosphate. This is Lysine--tRNA ligase from Acinetobacter baumannii (strain ATCC 17978 / DSM 105126 / CIP 53.77 / LMG 1025 / NCDC KC755 / 5377).